A 478-amino-acid chain; its full sequence is MKKQWTRRSAAAIAMVTTLLLSSHSFAASEKTERVDPRNEAYAKQHADQYESWRPTSDSVQIEDALAEDPNMVILWAGYGFAKDYNKARGHFYAIDDVRETLRTAGPTDENSGPMPMACWSCKSPDVGRVIEEQGEDGYFSGKWARLGSEIQNPIGCADCHDTRSEEFKNGGPALAITKPHVERAMNAIGKPFDDQSRLDKQASVCGQCHVEYYFTGKTKAVKFPWDKGTTVDEMEEYYDEIGFSDWTHKVSKAPMLKAQHPGYETWREGIHGKNKVVCVDCHMPKVTREDGTVYTDHKVGNPFDRFEDTCANCHTQSKDMLREIVSSRKAQVLKMKLTAERQIVAAHFEAGAAWDAGATKEEMAPILQDIRHAQWRWDYAIASHGIHMHAPEVALEVLGSAVDRAADARTKLVRLLAKKGITDPIEIPDISTKAAAQKALGMDMEGMEAEKKHFLETVVPKWDQQAKEREAADYHPL.

Positions methionine 1–alanine 27 are cleaved as a signal peptide. Position 91 (histidine 91) interacts with heme c. 3 residues coordinate heme: cysteine 119, cysteine 122, and lysine 123. Heme c contacts are provided by cysteine 157, cysteine 160, histidine 161, cysteine 206, cysteine 209, and histidine 210. Ca(2+) is bound by residues glutamate 212, tyrosine 213, lysine 258, and glutamine 260. Residue tyrosine 213 coordinates substrate. Histidine 261 lines the substrate pocket. 9 residues coordinate heme c: histidine 272, cysteine 279, cysteine 282, histidine 283, histidine 298, cysteine 311, cysteine 314, histidine 315, and histidine 390.

It belongs to the cytochrome c-552 family. It depends on Ca(2+) as a cofactor. Heme c serves as cofactor.

The protein resides in the periplasm. The enzyme catalyses 6 Fe(III)-[cytochrome c] + NH4(+) + 2 H2O = 6 Fe(II)-[cytochrome c] + nitrite + 8 H(+). It participates in nitrogen metabolism; nitrate reduction (assimilation). Its function is as follows. Catalyzes the reduction of nitrite to ammonia, consuming six electrons in the process. In Aliivibrio salmonicida (strain LFI1238) (Vibrio salmonicida (strain LFI1238)), this protein is Cytochrome c-552.